The following is a 1413-amino-acid chain: DNA-directed RNA polymerase subunit beta' (1413 aa).

Positions 70, 72, 85, and 88 each coordinate Zn(2+). Positions 460, 462, and 464 each coordinate Mg(2+). Cysteine 814, cysteine 888, cysteine 895, and cysteine 898 together coordinate Zn(2+).

It belongs to the RNA polymerase beta' chain family. In terms of assembly, the RNAP catalytic core consists of 2 alpha, 1 beta, 1 beta' and 1 omega subunit. When a sigma factor is associated with the core the holoenzyme is formed, which can initiate transcription. Requires Mg(2+) as cofactor. The cofactor is Zn(2+).

The catalysed reaction is RNA(n) + a ribonucleoside 5'-triphosphate = RNA(n+1) + diphosphate. In terms of biological role, DNA-dependent RNA polymerase catalyzes the transcription of DNA into RNA using the four ribonucleoside triphosphates as substrates. The chain is DNA-directed RNA polymerase subunit beta' from Bordetella avium (strain 197N).